Consider the following 217-residue polypeptide: AFG2-interacting ribosome maturation factor (217 aa).

Part of the 55LCC heterohexameric ATPase complex composed at least of AIRIM, AFG2A, AFG2B and CINP. Does not associate with pre-60S ribosomal particles. In terms of processing, phosphorylated on serines by CK2 kinase.

Its subcellular location is the nucleus. It localises to the cytoplasm. Its function is as follows. Part of the 55LCC heterohexameric ATPase complex which is chromatin-associated and promotes replisome proteostasis to maintain replication fork progression and genome stability. Required for replication fork progression, sister chromatid cohesion, and chromosome stability. The ATPase activity is specifically enhanced by replication fork DNA and is coupled to cysteine protease-dependent cleavage of replisome substrates in response to replication fork damage. Uses ATPase activity to process replisome substrates in S-phase, facilitating their proteolytic turnover from chromatin to ensure DNA replication and mitotic fidelity. Involved in the cytoplasmic maturation steps of pre-60S ribosomal particles by promoting the release of shuttling protein RSL24D1/RLP24 from the pre-ribosomal particles. The polypeptide is AFG2-interacting ribosome maturation factor (Airim) (Mus musculus (Mouse)).